A 349-amino-acid polypeptide reads, in one-letter code: S-adenosylmethionine:tRNA ribosyltransferase-isomerase (349 aa).

This sequence belongs to the QueA family. As to quaternary structure, monomer.

The protein localises to the cytoplasm. The enzyme catalyses 7-aminomethyl-7-carbaguanosine(34) in tRNA + S-adenosyl-L-methionine = epoxyqueuosine(34) in tRNA + adenine + L-methionine + 2 H(+). The protein operates within tRNA modification; tRNA-queuosine biosynthesis. Functionally, transfers and isomerizes the ribose moiety from AdoMet to the 7-aminomethyl group of 7-deazaguanine (preQ1-tRNA) to give epoxyqueuosine (oQ-tRNA). This Pseudomonas fluorescens (strain SBW25) protein is S-adenosylmethionine:tRNA ribosyltransferase-isomerase.